Here is a 375-residue protein sequence, read N- to C-terminus: Kininogen (375 aa).

The signal sequence occupies residues 1–23 (MKLGVRLCVLVVFSLQLWGPGQG). Cystatin kininogen-type domains are found at residues 35 to 139 (CDDK…VEAP) and 156 to 260 (VESE…GPLD). An N-linked (GlcNAc) asparagine glycan is attached at Asn-74. 4 cysteine pairs are disulfide-bonded: Cys-91–Cys-102, Cys-115–Cys-133, Cys-211–Cys-223, and Cys-234–Cys-254. A glycan (N-linked (GlcNAc) asparagine) is linked at Asn-235. The interval 283–375 (EVKTTQASTA…LSDLDLLGKK (93 aa)) is disordered.

N-glycosylated, with sialylated biantennary complex-type glycans. Post-translationally, O-glycosylated, sialylated oligosaccharides. In terms of processing, bradykinin is released from kininogen by kallikrein. The N-terminus is blocked. In terms of tissue distribution, expressed in the skin, liver, intestine, spleen, pancreas and kidney.

The protein resides in the cytoplasm. It is found in the vacuole. Functionally, inhibits papain and ficin (cysteine proteinases) but not trypsin (a serine proteinase). The polypeptide is Kininogen (LOC106584303) (Salmo salar (Atlantic salmon)).